Here is a 188-residue protein sequence, read N- to C-terminus: Putative CC-type chemokine FPV060 (188 aa).

This sequence belongs to the intercrine beta (chemokine CC) family. Highly divergent.

The protein is Putative CC-type chemokine FPV060 of Fowlpox virus (strain NVSL) (FPV).